We begin with the raw amino-acid sequence, 85 residues long: Large ribosomal subunit protein bL27 (85 aa).

The interval 1-21 is disordered; the sequence is MAHKKGVGSTRNGRDSESKRL.

The protein belongs to the bacterial ribosomal protein bL27 family.

This chain is Large ribosomal subunit protein bL27, found in Geobacter sulfurreducens (strain ATCC 51573 / DSM 12127 / PCA).